The sequence spans 1247 residues: uncharacterized protein (1247 aa).

8 disordered regions span residues 25–141, 169–431, 472–667, 738–770, 807–857, 869–1087, 1099–1122, and 1139–1162; these read KYNN…HSPP, AANN…QQPQ, QQQP…PSSS, NSNSFNNGDNNNNNNNNNNNNHHNNDIDDSEPI, YSNR…QNIE, GKNF…NNNN, STLNNSQDDSYQQEQEQQEQESQQ, and QQQQQQQNYSSTPPNITPHLKGDG. Over residues 26 to 125 the composition is skewed to low complexity; that stretch reads YNNSNNYNNN…SNNSINSNSY (100 aa). Polar residues predominate over residues 126-139; the sequence is KVNTPTQNGKSSHS. Composition is skewed to low complexity over residues 169–178, 185–223, and 230–341; these read AANNGSSNSS, SNSNTMNNNNNNNNNNNNNSNSSNNNNNGNNNNNNNYNS, and NNNN…YSNS. Over residues 342 to 356 the composition is skewed to polar residues; that stretch reads KYNQQKSYNNAPHQL. Low complexity-rich tracts occupy residues 363–375, 385–394, 409–431, and 472–484; these read NSYYNKNNYNNGN, GSGNSSNSNG, QSQSQQQPQQQQQQQPQQPQQPQ, and QQQPPQQQQQQQQ. The segment covering 511–522 has biased composition (polar residues); it reads GLNNSLNGQTDL. Low complexity-rich tracts occupy residues 523 to 544, 553 to 628, 655 to 667, 738 to 759, 807 to 855, and 871 to 928; these read NNSNYNSNSNNNNTNNNNTNNN, YNYN…VGSN, TPSSSTTTSPSSS, NSNSFNNGDNNNNNNNNNNNNH, YSNR…DSQN, and NFNN…ENNN. Polar residues predominate over residues 929–942; that stretch reads GDVFSNGFSTWTPK. Residues 943 to 983 show a composition bias toward low complexity; it reads SGSNSLNNSQNNLSNGQNSSNNSQNNLNNSQNSLNSSGNHH. The span at 984-995 shows a compositional bias: basic residues; the sequence is SNYHGHNNHHHY. Over residues 996–1021 the composition is skewed to low complexity; it reads NNNNNNNNNNNNNNNNNNNNNNNGNG. A compositionally biased stretch (polar residues) spans 1026 to 1044; the sequence is YYNNKYQQKSPQHQSSNSV. Pro residues predominate over residues 1047–1060; it reads IPPPGFSTIAPPPG. The span at 1064-1087 shows a compositional bias: low complexity; sequence NNNNNNNNNNNNNNNKNNNSNNNN. Residues 1099 to 1108 show a composition bias toward polar residues; that stretch reads STLNNSQDDS. Over residues 1110–1122 the composition is skewed to low complexity; the sequence is QQEQEQQEQESQQ.

This is an uncharacterized protein from Dictyostelium discoideum (Social amoeba).